Here is a 340-residue protein sequence, read N- to C-terminus: Quinic acid degradation cluster protein x (340 aa).

Mg(2+)-binding residues include glutamate 90, aspartate 115, leucine 117, aspartate 118, and aspartate 262. Glutamate 90 lines the substrate pocket. Substrate-binding positions include 117 to 120 and aspartate 262; that span reads LDGT.

It belongs to the inositol monophosphatase superfamily.

In terms of biological role, part of the qa gene cluster that mediates the catabolism of quinic acid (QA) and as such, allows the use of QA as a sole carbon source. Its function within the pathway has not been determined yet but it probably plays a regulatory role. The qa cluster encodes 3 inducible enymes (qa-2, qa-3 and qa-4) catalyzing the first three reactions in the catabolism of quinic acid to protocatechuic acid (also known as 3,4-Dihydroxybenzoic acid). The polypeptide is Quinic acid degradation cluster protein x (Neurospora crassa (strain ATCC 24698 / 74-OR23-1A / CBS 708.71 / DSM 1257 / FGSC 987)).